The following is a 163-amino-acid chain: Endoribonuclease YbeY (163 aa).

3 residues coordinate Zn(2+): His-123, His-127, and His-133.

Belongs to the endoribonuclease YbeY family. Zn(2+) is required as a cofactor.

Its subcellular location is the cytoplasm. Single strand-specific metallo-endoribonuclease involved in late-stage 70S ribosome quality control and in maturation of the 3' terminus of the 16S rRNA. This Helicobacter hepaticus (strain ATCC 51449 / 3B1) protein is Endoribonuclease YbeY.